A 498-amino-acid polypeptide reads, in one-letter code: ATP synthase subunit beta, chloroplastic (498 aa).

172 to 179 (GGAGVGKT) contributes to the ATP binding site.

This sequence belongs to the ATPase alpha/beta chains family. F-type ATPases have 2 components, CF(1) - the catalytic core - and CF(0) - the membrane proton channel. CF(1) has five subunits: alpha(3), beta(3), gamma(1), delta(1), epsilon(1). CF(0) has four main subunits: a(1), b(1), b'(1) and c(9-12).

It localises to the plastid. It is found in the chloroplast thylakoid membrane. It carries out the reaction ATP + H2O + 4 H(+)(in) = ADP + phosphate + 5 H(+)(out). In terms of biological role, produces ATP from ADP in the presence of a proton gradient across the membrane. The catalytic sites are hosted primarily by the beta subunits. The chain is ATP synthase subunit beta, chloroplastic from Solanum lycopersicum (Tomato).